Consider the following 4042-residue polypeptide: Polyketide synthase-nonribosomal peptide synthetase ffsA (4042 aa).

Residues 17–453 form the Ketosynthase family 3 (KS3) domain; the sequence is REPIAIVGSA…GANAHAILEA (437 aa). Catalysis depends on for beta-ketoacyl synthase activity residues Cys-190, His-330, and His-373. Residues 561–878 are malonyl-CoA:ACP transacylase (MAT) domain; the sequence is VFTGQGAQWK…TGLLSRGRPD (318 aa). The interval 950 to 1083 is N-terminal hotdog fold; the sequence is HEILGTKCPD…GKLKVTLGEP (134 aa). The interval 950–1249 is dehydratase (DH) domain; the sequence is HEILGTKCPD…LQTKPLANAT (300 aa). A PKS/mFAS DH domain is found at 950–1251; sequence HEILGTKCPD…TKPLANATAA (302 aa). His-982 serves as the catalytic Proton acceptor; for dehydratase activity. A C-terminal hotdog fold region spans residues 1098–1251; sequence MIDVDSERFY…TKPLANATAA (154 aa). The Proton donor; for dehydratase activity role is filled by Asp-1158. Residues 1390–1613 form a methyltransferase (MT) domain region; sequence DNLLNDFYVH…VDDHVNFLRD (224 aa). Residues 2116 to 2289 form a ketoreductase (KR)domain region; it reads TYWLVGLSGG…AGSAINIGTI (174 aa). A Carrier 1 domain is found at 2399–2476; it reads EAREIIEESL…EMVAAAQEKL (78 aa). An O-(pantetheine 4'-phosphoryl)serine modification is found at Ser-2436. The segment at 2515 to 2601 is disordered; the sequence is EKAEYADFDD…FDSDSDNASI (87 aa). Residues 2520 to 2532 show a composition bias toward acidic residues; that stretch reads ADFDDENEEEGIP. The tract at residues 2629–3061 is condensation; that stretch reads RTLPMSFGQT…ISRPSLYDPQ (433 aa). Residues 3089 to 3486 are adenylation; it reads EIVKAHGSKV…EDGHLVLEGR (398 aa). Residues 3607–3684 enclose the Carrier 2 domain; it reads RDSTEKLKDI…AMARMVDPTA (78 aa). Position 3644 is an O-(pantetheine 4'-phosphoryl)serine (Ser-3644). The segment at 3750–3971 is reductase-like domain; the sequence is ITGATGFLGK…DFVDVEKVAT (222 aa).

In the C-terminal section; belongs to the NRP synthetase family.

It functions in the pathway mycotoxin biosynthesis. Hybrid PKS-NRPS synthetase; part of the gene cluster that mediates the biosynthesis of the cytotoxic leucine-containing cytochalasans, including aspochalasin C, aspochalasin E, TMC-169, flavichalasine F, aspergillin PZ, aspochalasin M and flavichalasine G. The first step in the pathway is catalyzed by the hybrid PKS-NRPS ffsA that utilizes 8 units of malonyl-CoA to iteratively assemble the octaketide chain before addition of L-leucine by the C-terminal NRPS modules. Because ffsA lacks a designated enoylreductase (ER) domain, the required activity is provided the enoyl reductase fssC. The methyltransferase (MT) domain of ffsA catalyzes the alpha-methylation at C10 and C14 using S-adenosyl-L-methionine as the methyl-donating cosubstrate. Reduction by the hydrolyase ffsE, followed by dehydration and intra-molecular Diels-Alder cyclization by the Diels-Alderase ffsF then yield the required isoindolone-fused macrocycle. A number of oxidative steps catalyzed by the tailoring cytochrome P450 monooxygenase ffsD, the FAD-linked oxidoreductase ffsJ and the short-chain dehydrogenase/reductase ffsI, are further required to afford the final products. This is Polyketide synthase-nonribosomal peptide synthetase ffsA from Aspergillus flavipes.